The sequence spans 366 residues: Uroporphyrinogen decarboxylase (366 aa).

Substrate contacts are provided by residues 28 to 32 (RQAGR), Asp78, Tyr160, Thr215, and His333.

This sequence belongs to the uroporphyrinogen decarboxylase family. As to quaternary structure, homodimer.

The protein localises to the cytoplasm. The catalysed reaction is uroporphyrinogen III + 4 H(+) = coproporphyrinogen III + 4 CO2. Its pathway is porphyrin-containing compound metabolism; protoporphyrin-IX biosynthesis; coproporphyrinogen-III from 5-aminolevulinate: step 4/4. Catalyzes the decarboxylation of four acetate groups of uroporphyrinogen-III to yield coproporphyrinogen-III. In Paraburkholderia phytofirmans (strain DSM 17436 / LMG 22146 / PsJN) (Burkholderia phytofirmans), this protein is Uroporphyrinogen decarboxylase.